Consider the following 308-residue polypeptide: Polyprenal reductase (308 aa).

Over 1 to 2 (MT) the chain is Cytoplasmic. Residues 3 to 23 (LLALVWLLLDATFLITLLWHL) traverse the membrane as a helical segment. At 24–65 (LQGCKSGHSLLCSVFQDLIRYGKTKTGLQRPAWLQWFDIPKR) the chain is on the lumenal side. A helical transmembrane segment spans residues 66-86 (CFWHFYCVSLIWNGCLLWILL). Residues 87 to 120 (RLLLQSVPVPEWLQLVLHFLHAGSEPQILDRELS) lie on the Cytoplasmic side of the membrane. A helical membrane pass occupies residues 121–141 (VILALALLWLHSLRRLLECLF). The Lumenal portion of the chain corresponds to 142–148 (VSVFSNG). The helical transmembrane segment at 149–169 (VIHLVQYCFGLGYYFLIGITV) threads the bilayer. At 170-184 (LTYCPLDRRTVSTDN) the chain is on the cytoplasmic side. The chain crosses the membrane as a helical span at residues 185 to 205 (LLTQCHWYHILGLALYIWASL). Topologically, residues 206–255 (HQYRCHCILAGLRKSASGNVINLNHSVPCGDWFERVSCPHYFAELLIYVS) are lumenal. The chain crosses the membrane as a helical span at residues 256–276 (IAVVFGLLNTIWWLVVLYVLL). The Cytoplasmic portion of the chain corresponds to 277–308 (NQALAALLCHEFYHEKFDTYPIHRKAFIPFIF).

This sequence belongs to the steroid 5-alpha reductase family. Polyprenal reductase subfamily.

It localises to the endoplasmic reticulum membrane. It carries out the reaction a di-trans,poly-cis-dolichal + NADP(+) = a di-trans,poly-cis-polyprenal + NADPH + H(+). The catalysed reaction is a 3-oxo-5alpha-steroid + NADP(+) = a 3-oxo-Delta(4)-steroid + NADPH + H(+). The enzyme catalyses androst-4-ene-3,17-dione + NADPH + H(+) = 5alpha-androstan-3,17-dione + NADP(+). It catalyses the reaction 17beta-hydroxy-5alpha-androstan-3-one + NADP(+) = testosterone + NADPH + H(+). It participates in protein modification; protein glycosylation. In terms of biological role, plays a key role in early steps of protein N-linked glycosylation by being involved in the conversion of polyprenol into dolichol. Acts as a polyprenal reductase that mediates the reduction of polyprenal into dolichal in a NADP-dependent mechanism. Dolichols are required for the synthesis of dolichol-linked monosaccharides and the oligosaccharide precursor used for N-glycosylation. Also able to convert testosterone (T) into 5-alpha-dihydrotestosterone (DHT). The chain is Polyprenal reductase (srd5a3) from Xenopus tropicalis (Western clawed frog).